A 570-amino-acid chain; its full sequence is Peptidyl-prolyl cis-trans isomerase FKBP9 (570 aa).

A signal peptide spans 1–24 (MAFGARGWRRWSLLLLLLWVTGQA). PPIase FKBP-type domains are found at residues 54–142 (GDFV…VDIW), 166–254 (SDFV…LDLH), 278–365 (GDFL…IDFH), and 389–477 (GDYL…LELV). 4 N-linked (GlcNAc...) asparagine glycosylation sites follow: Asn174, Asn286, Asn302, and Asn397. 2 EF-hand domains span residues 488-523 (WNGE…QVAS) and 533-568 (NAEM…TKHD). Ca(2+)-binding residues include Asp501, Asp503, Asn505, Glu507, Glu512, Asp546, Asn548, Asp550, Lys552, and Glu557. The Prevents secretion from ER signature appears at 567 to 570 (HDEL).

Post-translationally, phosphorylated.

It is found in the endoplasmic reticulum lumen. It carries out the reaction [protein]-peptidylproline (omega=180) = [protein]-peptidylproline (omega=0). Its activity is regulated as follows. Inhibited by FK506. In terms of biological role, PPIases accelerate the folding of proteins during protein synthesis. In Rattus norvegicus (Rat), this protein is Peptidyl-prolyl cis-trans isomerase FKBP9 (Fkbp9).